We begin with the raw amino-acid sequence, 229 residues long: Extracellular small neutral protease (229 aa).

Residues 1 to 28 form the signal peptide; the sequence is MRMPLSVLTAAGLSLATLGLGTAGPASA. The propeptide occupies 29 to 81; sequence TPTAEGAPVVAYDGSPSAGSPADAKAEAAANRAFFEAVLRSVAEKRAANPKST. The Ca(2+) site is built by D159 and T161. Residue H166 coordinates Zn(2+). E167 is an active-site residue. Zn(2+) contacts are provided by H170 and D176. Cysteines 182 and 195 form a disulfide.

The protein belongs to the peptidase M7 family. Monomer. Ca(2+) serves as cofactor. Zn(2+) is required as a cofactor.

It is found in the secreted. It carries out the reaction Hydrolyzes proteins with a preference for Tyr or Phe in the P1' position. Has no action on amino-acid p-nitroanilides.. Its function is as follows. Milk hydrolyzing. The sequence is that of Extracellular small neutral protease (snpA) from Streptomyces sp. (strain C5).